We begin with the raw amino-acid sequence, 437 residues long: Histidine--tRNA ligase (437 aa).

This sequence belongs to the class-II aminoacyl-tRNA synthetase family. As to quaternary structure, homodimer.

Its subcellular location is the cytoplasm. It catalyses the reaction tRNA(His) + L-histidine + ATP = L-histidyl-tRNA(His) + AMP + diphosphate + H(+). The polypeptide is Histidine--tRNA ligase (Opitutus terrae (strain DSM 11246 / JCM 15787 / PB90-1)).